We begin with the raw amino-acid sequence, 177 residues long: Large ribosomal subunit protein uL6 (177 aa).

Belongs to the universal ribosomal protein uL6 family. In terms of assembly, part of the 50S ribosomal subunit.

Its function is as follows. This protein binds to the 23S rRNA, and is important in its secondary structure. It is located near the subunit interface in the base of the L7/L12 stalk, and near the tRNA binding site of the peptidyltransferase center. In Alteromonas mediterranea (strain DSM 17117 / CIP 110805 / LMG 28347 / Deep ecotype), this protein is Large ribosomal subunit protein uL6.